The sequence spans 75 residues: Small, acid-soluble spore protein Tlp (75 aa).

This sequence belongs to the Tlp family.

It localises to the spore core. The chain is Small, acid-soluble spore protein Tlp from Geobacillus kaustophilus (strain HTA426).